The following is a 189-amino-acid chain: Probable nicotinate-nucleotide adenylyltransferase (189 aa).

This sequence belongs to the NadD family.

It catalyses the reaction nicotinate beta-D-ribonucleotide + ATP + H(+) = deamido-NAD(+) + diphosphate. It participates in cofactor biosynthesis; NAD(+) biosynthesis; deamido-NAD(+) from nicotinate D-ribonucleotide: step 1/1. In terms of biological role, catalyzes the reversible adenylation of nicotinate mononucleotide (NaMN) to nicotinic acid adenine dinucleotide (NaAD). This Cereibacter sphaeroides (strain ATCC 17023 / DSM 158 / JCM 6121 / CCUG 31486 / LMG 2827 / NBRC 12203 / NCIMB 8253 / ATH 2.4.1.) (Rhodobacter sphaeroides) protein is Probable nicotinate-nucleotide adenylyltransferase.